We begin with the raw amino-acid sequence, 129 residues long: L5 homolog (129 aa).

The helical; Signal-anchor for type III membrane protein transmembrane segment at 27–47 threads the bilayer; it reads YFYILVFEVIVALIILNFFFK. Residues C76 and C106 are joined by a disulfide bond.

Belongs to the chordopoxvirinae L5 family. Part of a stable entry-fusion complex (EFC) which is at least composed of proteins A16, A21, A28, G3, G9, H2, J5, and L5. Formation of the viral membrane is necessary for the assembly of the complex. Interacts with G3. Post-translationally, most cysteines are linked by disulfide bonds. They are created by the viral disulfide bond formation pathway, a poxvirus-specific redox pathway that operates on the cytoplasmic side of the MV membranes.

It is found in the virion membrane. Functionally, envelope protein part of the entry-fusion complex responsible for the virus membrane fusion with host cell membrane during virus entry. Also plays a role in cell-cell fusion (syncytium formation). The chain is L5 homolog from Fowlpox virus (strain NVSL) (FPV).